The chain runs to 82 residues: Small ribosomal subunit protein bS18 (82 aa).

A disordered region spans residues 1–25 (MTEMNQTAIRRPFHRRRKTCPFSGT).

Belongs to the bacterial ribosomal protein bS18 family. Part of the 30S ribosomal subunit. Forms a tight heterodimer with protein bS6.

In terms of biological role, binds as a heterodimer with protein bS6 to the central domain of the 16S rRNA, where it helps stabilize the platform of the 30S subunit. This Bartonella henselae (strain ATCC 49882 / DSM 28221 / CCUG 30454 / Houston 1) (Rochalimaea henselae) protein is Small ribosomal subunit protein bS18.